Reading from the N-terminus, the 420-residue chain is Gamma-glutamyl phosphate reductase (420 aa).

This sequence belongs to the gamma-glutamyl phosphate reductase family.

It localises to the cytoplasm. The catalysed reaction is L-glutamate 5-semialdehyde + phosphate + NADP(+) = L-glutamyl 5-phosphate + NADPH + H(+). The protein operates within amino-acid biosynthesis; L-proline biosynthesis; L-glutamate 5-semialdehyde from L-glutamate: step 2/2. Catalyzes the NADPH-dependent reduction of L-glutamate 5-phosphate into L-glutamate 5-semialdehyde and phosphate. The product spontaneously undergoes cyclization to form 1-pyrroline-5-carboxylate. In Streptococcus pneumoniae (strain ATCC 700669 / Spain 23F-1), this protein is Gamma-glutamyl phosphate reductase.